The chain runs to 168 residues: Nascent polypeptide-associated complex subunit alpha (168 aa).

Residues 14-78 (SKNEKKAREL…PKVDDFTRRL (65 aa)) form the NAC-A/B domain. A disordered region spans residues 83–129 (QQAASAAKDPQSIQADMAAAAAAPAAPAAPAAAPEEDEAGQVDESGL). Over residues 100–115 (AAAAAAPAAPAAPAAA) the composition is skewed to low complexity. Residues 129–168 (LDGQDIELVMQQANVSRNKAVKALREHNSDIVNAIMSLSK) enclose the UBA domain.

The protein belongs to the NAC-alpha family. Part of the nascent polypeptide-associated complex (NAC), consisting of EGD2 and EGD1. NAC associates with ribosomes via EGD1.

Its subcellular location is the cytoplasm. The protein localises to the nucleus. In terms of biological role, component of the nascent polypeptide-associated complex (NAC), a dynamic component of the ribosomal exit tunnel, protecting the emerging polypeptides from interaction with other cytoplasmic proteins to ensure appropriate nascent protein targeting. The NAC complex also promotes mitochondrial protein import by enhancing productive ribosome interactions with the outer mitochondrial membrane and blocks the inappropriate interaction of ribosomes translating non-secretory nascent polypeptides with translocation sites in the membrane of the endoplasmic reticulum. EGD2 may also be involved in transcription regulation. The sequence is that of Nascent polypeptide-associated complex subunit alpha (EGD2) from Eremothecium gossypii (strain ATCC 10895 / CBS 109.51 / FGSC 9923 / NRRL Y-1056) (Yeast).